A 411-amino-acid polypeptide reads, in one-letter code: Multidrug resistance protein MdtA (411 aa).

An N-terminal signal peptide occupies residues 1 to 26 (MNNNKKTKKRFSLIIILLIVIAGAIA). A compositionally biased stretch (polar residues) spans 35-55 (SAPPVSKDTPTANTPNRSTAG). A disordered region spans residues 35–64 (SAPPVSKDTPTANTPNRSTAGSRRPPMPPV).

This sequence belongs to the membrane fusion protein (MFP) (TC 8.A.1) family. As to quaternary structure, part of a tripartite efflux system composed of MdtA, MdtB and MdtC.

It localises to the cell inner membrane. The chain is Multidrug resistance protein MdtA from Proteus mirabilis (strain HI4320).